A 152-amino-acid polypeptide reads, in one-letter code: UPF0266 membrane protein YobD (152 aa).

The next 3 helical transmembrane spans lie at leucine 6–methionine 26, isoleucine 45–histidine 65, and alanine 67–isoleucine 87.

It belongs to the UPF0266 family.

Its subcellular location is the cell inner membrane. The protein is UPF0266 membrane protein YobD of Shigella boydii serotype 18 (strain CDC 3083-94 / BS512).